The following is a 44-amino-acid chain: Protein PsbN (44 aa).

A helical transmembrane segment spans residues 7–29 (FFTTFLGCLLLSITGYSIYVGFG).

Belongs to the PsbN family.

The protein resides in the plastid. It is found in the chloroplast thylakoid membrane. Its function is as follows. May play a role in photosystem I and II biogenesis. The polypeptide is Protein PsbN (Pleurastrum terricola (Filamentous green alga)).